A 55-amino-acid chain; its full sequence is Large ribosomal subunit protein bL33 (55 aa).

It belongs to the bacterial ribosomal protein bL33 family.

The sequence is that of Large ribosomal subunit protein bL33 from Novosphingobium aromaticivorans (strain ATCC 700278 / DSM 12444 / CCUG 56034 / CIP 105152 / NBRC 16084 / F199).